A 20-amino-acid chain; its full sequence is Thrombin-like enzyme okinaxobin-2 (20 aa).

Positions 1–20 constitute a Peptidase S1 domain; the sequence is VVGGDECNINEHRFLVALYY.

This sequence belongs to the peptidase S1 family. Snake venom subfamily. Monomer. Post-translationally, glycosylated. Expressed by the venom gland.

The protein resides in the secreted. Strongly inactivated by diisopropylfluorophosphate (DFP) and to a lesser extent by tosyl-L-lysine chloromethyl ketone (TLCK). Thrombin-like snake venom serine protease. Releases both fibrinopeptides A and B from fibrinogen (FGA and FGB) to form fibrin clots. The chain is Thrombin-like enzyme okinaxobin-2 from Ovophis okinavensis (Ryukyu Island pit viper).